A 180-amino-acid chain; its full sequence is UPF0149 protein XAC3406 (180 aa).

Belongs to the UPF0149 family.

The chain is UPF0149 protein XAC3406 from Xanthomonas axonopodis pv. citri (strain 306).